A 282-amino-acid chain; its full sequence is NADPH-dependent 7-cyano-7-deazaguanine reductase (282 aa).

88–90 (IES) contacts substrate. Residue 90-91 (SK) participates in NADPH binding. The active-site Thioimide intermediate is cysteine 190. The Proton donor role is filled by aspartate 197. 229-230 (HE) contributes to the substrate binding site. 258 to 259 (RG) is an NADPH binding site.

The protein belongs to the GTP cyclohydrolase I family. QueF type 2 subfamily. As to quaternary structure, homodimer.

The protein resides in the cytoplasm. The catalysed reaction is 7-aminomethyl-7-carbaguanine + 2 NADP(+) = 7-cyano-7-deazaguanine + 2 NADPH + 3 H(+). It participates in tRNA modification; tRNA-queuosine biosynthesis. Its function is as follows. Catalyzes the NADPH-dependent reduction of 7-cyano-7-deazaguanine (preQ0) to 7-aminomethyl-7-deazaguanine (preQ1). The polypeptide is NADPH-dependent 7-cyano-7-deazaguanine reductase (Escherichia coli O9:H4 (strain HS)).